The sequence spans 200 residues: Probable nicotinate-nucleotide adenylyltransferase (200 aa).

The protein belongs to the NadD family.

It carries out the reaction nicotinate beta-D-ribonucleotide + ATP + H(+) = deamido-NAD(+) + diphosphate. It functions in the pathway cofactor biosynthesis; NAD(+) biosynthesis; deamido-NAD(+) from nicotinate D-ribonucleotide: step 1/1. Its function is as follows. Catalyzes the reversible adenylation of nicotinate mononucleotide (NaMN) to nicotinic acid adenine dinucleotide (NaAD). The chain is Probable nicotinate-nucleotide adenylyltransferase from Lachnoclostridium phytofermentans (strain ATCC 700394 / DSM 18823 / ISDg) (Clostridium phytofermentans).